A 1106-amino-acid chain; its full sequence is Protein translocase subunit SecA (1106 aa).

Residues Q175, 193-197 (GEGKT), and D694 each bind ATP. A disordered region spans residues 1021–1106 (QEAPADEQQP…KYKNCHGQNA (86 aa)). Basic and acidic residues predominate over residues 1042–1056 (QRQDMSKYREQKQDL). Residues 1057–1067 (SDPNQQAAASQ) are compositionally biased toward polar residues. Residues 1068-1085 (DTREQQKREPIRAEKTVG) show a composition bias toward basic and acidic residues. Zn(2+) is bound by residues C1090, C1092, C1101, and H1102.

It belongs to the SecA family. In terms of assembly, monomer and homodimer. Part of the essential Sec protein translocation apparatus which comprises SecA, SecYEG and auxiliary proteins SecDF. Other proteins may also be involved. It depends on Zn(2+) as a cofactor.

It localises to the cell inner membrane. Its subcellular location is the cytoplasm. It carries out the reaction ATP + H2O + cellular proteinSide 1 = ADP + phosphate + cellular proteinSide 2.. Part of the Sec protein translocase complex. Interacts with the SecYEG preprotein conducting channel. Has a central role in coupling the hydrolysis of ATP to the transfer of proteins into and across the cell membrane, serving as an ATP-driven molecular motor driving the stepwise translocation of polypeptide chains across the membrane. The chain is Protein translocase subunit SecA from Bacteroides thetaiotaomicron (strain ATCC 29148 / DSM 2079 / JCM 5827 / CCUG 10774 / NCTC 10582 / VPI-5482 / E50).